The chain runs to 362 residues: Chalcone synthase A (362 aa).

C168 is a catalytic residue.

It belongs to the thiolase-like superfamily. Chalcone/stilbene synthases family.

It carries out the reaction (E)-4-coumaroyl-CoA + 3 malonyl-CoA + 3 H(+) = 2',4,4',6'-tetrahydroxychalcone + 3 CO2 + 4 CoA. Its pathway is secondary metabolite biosynthesis; flavonoid biosynthesis. The primary product of this enzyme is 4,2',4',6'-tetrahydroxychalcone (also termed naringenin-chalcone or chalcone) which can under specific conditions spontaneously isomerize into naringenin. The sequence is that of Chalcone synthase A (CHSA) from Ipomoea triloba (Trilobed morning glory).